Here is a 464-residue protein sequence, read N- to C-terminus: Argininosuccinate lyase 2 (464 aa).

It belongs to the lyase 1 family. Argininosuccinate lyase subfamily.

It localises to the cytoplasm. It catalyses the reaction 2-(N(omega)-L-arginino)succinate = fumarate + L-arginine. It participates in amino-acid biosynthesis; L-arginine biosynthesis; L-arginine from L-ornithine and carbamoyl phosphate: step 3/3. In Pseudomonas fluorescens (strain Pf0-1), this protein is Argininosuccinate lyase 2.